The chain runs to 465 residues: Probable zinc metalloprotease PTT_17836 (465 aa).

An N-terminal signal peptide occupies residues 1–20; the sequence is MRSASTLAVCAATLLQIACS. Residue Asn140 is glycosylated (N-linked (GlcNAc...) asparagine). Zn(2+)-binding residues include His163, Asp183, and Glu216. N-linked (GlcNAc...) asparagine glycosylation occurs at Asn231. Asp243 lines the Zn(2+) pocket. Asn272, Asn330, Asn378, Asn384, Asn421, and Asn426 each carry an N-linked (GlcNAc...) asparagine glycan. The Fibronectin type-III domain maps to 371–464; it reads APTNVGVNTT…LPFPFGCARN (94 aa).

The protein belongs to the peptidase M28 family. M28B subfamily. It depends on Zn(2+) as a cofactor.

The protein localises to the secreted. This is Probable zinc metalloprotease PTT_17836 from Pyrenophora teres f. teres (strain 0-1) (Barley net blotch fungus).